The following is a 182-amino-acid chain: Large ribosomal subunit protein uL5 (182 aa).

As to quaternary structure, part of the 50S ribosomal subunit; part of the 5S rRNA/uL5/uL18/bL25 (TL7) subcomplex; has also been isolated as a complex with 5S rRNA, bL25 (TL7) and DNA binding protein II. Forms a bridge to the 30S subunit in the 70S ribosome, contacting protein uS13; this bridge is straddled by the 5S rRNA. Contacts the P site tRNA.

Its function is as follows. This is one of the proteins that bind and probably mediate the attachment of the 5S RNA into the large ribosomal subunit, where it forms part of the central protuberance. In the 70S ribosome it contacts protein S13 of the 30S subunit (forming bridge B1b) connecting the head of the 30S subunit to the top of the 50S subunit. The bridge itself contacts the P site tRNA and is implicated in movement during ribosome translocation. Also contacts the P site tRNA independently of the intersubunit bridge; the 5S rRNA and some of its associated proteins might help stabilize positioning of ribosome-bound tRNAs. This chain is Large ribosomal subunit protein uL5 (rplE), found in Thermus thermophilus (strain ATCC 27634 / DSM 579 / HB8).